Consider the following 239-residue polypeptide: Octanoyltransferase (239 aa).

The region spanning 48–236 (EGGDELVWLV…AFETVFGETV (189 aa)) is the BPL/LPL catalytic domain. Substrate-binding positions include 87–94 (RGGEYTYH), 167–169 (ALG), and 180–182 (GLS). Cys-198 serves as the catalytic Acyl-thioester intermediate.

The protein belongs to the LipB family.

The protein resides in the cytoplasm. The enzyme catalyses octanoyl-[ACP] + L-lysyl-[protein] = N(6)-octanoyl-L-lysyl-[protein] + holo-[ACP] + H(+). The protein operates within protein modification; protein lipoylation via endogenous pathway; protein N(6)-(lipoyl)lysine from octanoyl-[acyl-carrier-protein]: step 1/2. Catalyzes the transfer of endogenously produced octanoic acid from octanoyl-acyl-carrier-protein onto the lipoyl domains of lipoate-dependent enzymes. Lipoyl-ACP can also act as a substrate although octanoyl-ACP is likely to be the physiological substrate. The sequence is that of Octanoyltransferase from Rhizobium etli (strain CIAT 652).